The chain runs to 234 residues: uncharacterized protein (234 aa).

Residues 65–89 (QNANRQEGRRRGLRPSSDGNLRREN) form a disordered region. Residues 185–220 (CAVCLHNKVCVLFQKCKHVITCGPCSLRIKECPVCK) form an RING-type zinc finger.

Belongs to the IIV-6 175R/332L family.

This is an uncharacterized protein from Acheta domesticus (House cricket).